Here is a 241-residue protein sequence, read N- to C-terminus: Cell division cycle-associated protein 4 (241 aa).

The 48-residue stretch at 30 to 77 (YSLQRQSLLDMSLVKLQLCHMLVEPNLCRSVLIANTVRQIQEEMTQDG) folds into the SERTA domain.

As to expression, highest levels of expression in the pancreas, thymus, testis, spleen, liver, placenta and leukocytes. Relatively low levels in the lung, kidney, prostate, ovary, small intestine and colon. Hardly detectable, if at all, in the brain, skeletal muscle and heart.

It is found in the nucleus. Its function is as follows. May participate in the regulation of cell proliferation through the E2F/RB pathway. May be involved in molecular regulation of hematopoietic stem cells and progenitor cell lineage commitment and differentiation. In Homo sapiens (Human), this protein is Cell division cycle-associated protein 4 (CDCA4).